The primary structure comprises 133 residues: MEEDQELERKISGLKTSMAEGERKTALEMVQAAGTDRHCVTFVLHEEDHTLGNSLRYMIMKNPEVEFCGYTTTHPSESKINLRIQTRGTLPAVEPFQRGLNELMNVCQHVLDKFEASIKDYKDQKASRNESTF.

Met-1 carries the post-translational modification N-acetylmethionine.

This sequence belongs to the archaeal Rpo11/eukaryotic RPB11/RPC19 RNA polymerase subunit family. Component of the RNA polymerase I and RNA polymerase III complexes consisting of at least 13 and 17 subunits, respectively. Pol I complex consists of a ten-subunit catalytic core composed of POLR1A/RPA1, POLR1B/RPA2, POLR1C/RPAC1, POLR1D/RPAC2, POLR1H/RPA12, POLR2E/RPABC1, POLR2F/RPABC2, POLR2H/RPABC3, POLR2K/RPABC4 and POLR2L/RPABC5; a mobile stalk subunit POLR1F/RPA43 protruding from the core and additional subunits homologous to general transcription factors POLR1E/RPA49 and POLR1G/RPA34. Part of Pol I pre-initiation complex (PIC), in which Pol I core assembles with RRN3 and promoter-bound UTBF and SL1/TIF-IB complex. Pol III complex consists of a ten-subunit catalytic core composed of POLR3A/RPC1, POLR3B/RPC2, POLR1C/RPAC1, POLR1D/RPAC2, POLR3K/RPC10, POLR2E/RPABC1, POLR2F/RPABC2, POLR2H/RPABC3, POLR2K/RPABC4 and POLR2L/RPABC5; a mobile stalk composed of two subunits POLR3H/RPC8 and CRCP/RPC9, protruding from the core and functioning primarily in transcription initiation; and additional subunits homologous to general transcription factors of the RNA polymerase II machinery, POLR3C/RPC3-POLR3F/RPC6-POLR3G/RPC7 heterotrimer required for transcription initiation and POLR3D/RPC4-POLR3E/RPC5 heterodimer involved in both transcription initiation and termination.

It is found in the nucleus. It localises to the nucleolus. DNA-dependent RNA polymerase catalyzes the transcription of DNA into RNA using the four ribonucleoside triphosphates as substrates. Common component of RNA polymerases I and III which synthesize ribosomal RNA precursors and short non-coding RNAs including 5S rRNA, snRNAs, tRNAs and miRNAs, respectively. The polypeptide is DNA-directed RNA polymerases I and III subunit RPAC2 (Homo sapiens (Human)).